The sequence spans 129 residues: MKSVQFCFLFCCWRAICCRSCELTNITITVEKEECSFCISINTTWCAGYCYTRDLVYKDPARPNIQKACTFKELVYETVKVPGCAHHADSLYTYPVATECHCGKCDRDSTDCTVRGLGPSYCSFSDIRE.

The first 19 residues, 1 to 19 (MKSVQFCFLFCCWRAICCR), serve as a signal peptide directing secretion. Disulfide bonds link Cys21/Cys69, Cys35/Cys84, Cys38/Cys122, Cys46/Cys100, Cys50/Cys102, and Cys105/Cys112. N-linked (GlcNAc...) asparagine glycosylation is found at Asn25 and Asn42.

Belongs to the glycoprotein hormones subunit beta family. Heterodimer. The active follitropin is a heterodimer composed of an alpha chain/CGA shared with other hormones and a unique beta chain/FSHB shown here.

The protein localises to the secreted. In terms of biological role, together with the alpha chain CGA constitutes follitropin, the follicle-stimulating hormone, and provides its biological specificity to the hormone heterodimer. Binds FSHR, a G protein-coupled receptor, on target cells to activate downstream signaling pathways. Follitropin is involved in follicle development and spermatogenesis in reproductive organs. The protein is Follitropin subunit beta (FSHB) of Ovis aries (Sheep).